The following is a 249-amino-acid chain: Cobalt-precorrin-6A reductase (249 aa).

The protein belongs to the precorrin-6x reductase family.

The catalysed reaction is Co-precorrin-6B + NAD(+) = Co-precorrin-6A + NADH + H(+). The protein operates within cofactor biosynthesis; adenosylcobalamin biosynthesis; cob(II)yrinate a,c-diamide from sirohydrochlorin (anaerobic route): step 7/10. Catalyzes the reduction of the macrocycle of cobalt-precorrin-6A to cobalt-precorrin-6B. The polypeptide is Cobalt-precorrin-6A reductase (cbiJ) (Methanocaldococcus jannaschii (strain ATCC 43067 / DSM 2661 / JAL-1 / JCM 10045 / NBRC 100440) (Methanococcus jannaschii)).